A 453-amino-acid chain; its full sequence is tRNA modification GTPase MnmE (453 aa).

R22, E79, and K119 together coordinate (6S)-5-formyl-5,6,7,8-tetrahydrofolate. The 162-residue stretch at 215 to 376 (GMKVVIAGRP…LKQHLKSLMG (162 aa)) folds into the TrmE-type G domain. N225 is a binding site for K(+). GTP is bound by residues 225-230 (NAGKSS), 244-250 (TEIAGTT), 269-272 (DTAG), and 334-337 (NKAD). S229 contacts Mg(2+). Residues T244, I246, and T249 each contribute to the K(+) site. Residue T250 coordinates Mg(2+). K453 is a (6S)-5-formyl-5,6,7,8-tetrahydrofolate binding site.

The protein belongs to the TRAFAC class TrmE-Era-EngA-EngB-Septin-like GTPase superfamily. TrmE GTPase family. Homodimer. Heterotetramer of two MnmE and two MnmG subunits. The cofactor is K(+).

Its subcellular location is the cytoplasm. Exhibits a very high intrinsic GTPase hydrolysis rate. Involved in the addition of a carboxymethylaminomethyl (cmnm) group at the wobble position (U34) of certain tRNAs, forming tRNA-cmnm(5)s(2)U34. The polypeptide is tRNA modification GTPase MnmE (Shewanella frigidimarina (strain NCIMB 400)).